The sequence spans 393 residues: Sialyltransferase-like protein 1 (393 aa).

Topologically, residues 1–8 are cytoplasmic; sequence MKRPLRRP. A helical; Signal-anchor for type II membrane protein transmembrane segment spans residues 9–27; sequence FAVLLFVVLCAAASFPSVL. Residues 28–393 are Lumenal-facing; sequence RRSVGPAPVL…IAVPPVVFYH (366 aa). N-linked (GlcNAc...) asparagine glycans are attached at residues N49, N212, and N258.

This sequence belongs to the glycosyltransferase 29 family. Expressed in leaves and stalks. Expressed at low levels in roots.

It localises to the golgi apparatus membrane. Possesses sialyltransferase-like activity in vitro. Transfers sialic acid to the oligosaccharide Gal-beta-1,3-GalNAc and to glycoproteins such as asialofetuin, alpha-1-acid glycoprotein (NeuAc-alpha-2,3-Gal-beta-1,3-GalNAc-) and andasialo-alpha-1-acid glycoprotein. The transferred sialic acid is linked to galactose of Gal-beta-1,3-GalNAc through alpha-2,6-linkage. This chain is Sialyltransferase-like protein 1, found in Oryza sativa subsp. japonica (Rice).